The chain runs to 558 residues: CTP synthase (558 aa).

The tract at residues 1-267 (MTKFVFVTGG…AQQTLELLNL (267 aa)) is amidoligase domain. A CTP-binding site is contributed by Ser13. Ser13 is a UTP binding site. Residues 14-19 (SIGKGI) and Asp71 contribute to the ATP site. Residues Asp71 and Glu141 each coordinate Mg(2+). CTP is bound by residues 148 to 150 (DIE), 188 to 193 (KTKPTQ), and Lys224. UTP-binding positions include 188-193 (KTKPTQ) and Lys224. Residues 292-534 (EVALVGKYVQ…VKASVDYNHV (243 aa)) form the Glutamine amidotransferase type-1 domain. Gly354 contacts L-glutamine. Cys381 acts as the Nucleophile; for glutamine hydrolysis in catalysis. L-glutamine is bound by residues 382-385 (MGMQ), Glu405, and Arg462. Residues His507 and Glu509 contribute to the active site.

Belongs to the CTP synthase family. In terms of assembly, homotetramer.

The enzyme catalyses UTP + L-glutamine + ATP + H2O = CTP + L-glutamate + ADP + phosphate + 2 H(+). The catalysed reaction is L-glutamine + H2O = L-glutamate + NH4(+). It catalyses the reaction UTP + NH4(+) + ATP = CTP + ADP + phosphate + 2 H(+). It functions in the pathway pyrimidine metabolism; CTP biosynthesis via de novo pathway; CTP from UDP: step 2/2. Allosterically activated by GTP, when glutamine is the substrate; GTP has no effect on the reaction when ammonia is the substrate. The allosteric effector GTP functions by stabilizing the protein conformation that binds the tetrahedral intermediate(s) formed during glutamine hydrolysis. Inhibited by the product CTP, via allosteric rather than competitive inhibition. In terms of biological role, catalyzes the ATP-dependent amination of UTP to CTP with either L-glutamine or ammonia as the source of nitrogen. Regulates intracellular CTP levels through interactions with the four ribonucleotide triphosphates. The chain is CTP synthase from Gloeothece citriformis (strain PCC 7424) (Cyanothece sp. (strain PCC 7424)).